We begin with the raw amino-acid sequence, 494 residues long: Syntaphilin (494 aa).

The interval 1–75 is disordered; the sequence is MAMSLPGSRR…GIKPPTPEQY (75 aa). The segment covering 7–49 has biased composition (low complexity); it reads GSRRTSAGSRRRTSPPVSVRDAYGTSSLSSSSNSGSYKGSDSS. Positions 79–161 form a coiled coil; that stretch reads LQQKEVCIRH…VKNNLIDKDK (83 aa). Disordered stretches follow at residues 191 to 246 and 338 to 398; these read MAKE…SGFA and CGTD…GQSV. Phosphoserine occurs at positions 200 and 204. The span at 207-217 shows a compositional bias: polar residues; sequence RSLTRSSTYTK. Thr-214 is subject to Phosphothreonine. The residue at position 219 (Ser-219) is a Phosphoserine. Low complexity predominate over residues 230-246; that stretch reads GDPSSGSAEDGADSGFA. Positions 344-353 are enriched in basic and acidic residues; the sequence is SGDRCPELDA. A helical transmembrane segment spans residues 425–444; that stretch reads YIVDLLAVVVPAVPTVAWLC.

In terms of assembly, binds to STX1A. Interacts with DNM1; this interaction inhibits the binding of DNM1 to AMPH and DNM1-receptor-mediated endocytosis. Brain specific. Found in synapses.

The protein localises to the membrane. Its subcellular location is the synapse. The protein resides in the synaptosome. Functionally, inhibits SNARE complex formation by absorbing free STX1A. This is Syntaphilin from Homo sapiens (Human).